Consider the following 259-residue polypeptide: Caffeoyl-CoA O-methyltransferase (259 aa).

Position 33 (Lys33) interacts with substrate. S-adenosyl-L-methionine contacts are provided by residues Thr75, Glu97, Gly99–Val100, Ser105, Asp123, and Ala152. Asp175 lines the substrate pocket. Asp175 contributes to the a divalent metal cation binding site. Position 177 (Asp177) interacts with S-adenosyl-L-methionine. Positions 201 and 202 each coordinate a divalent metal cation. Position 206 (Asn206) interacts with substrate.

Belongs to the class I-like SAM-binding methyltransferase superfamily. Cation-dependent O-methyltransferase family. CCoAMT subfamily. Requires a divalent metal cation as cofactor.

It carries out the reaction (E)-caffeoyl-CoA + S-adenosyl-L-methionine = (E)-feruloyl-CoA + S-adenosyl-L-homocysteine + H(+). Its pathway is aromatic compound metabolism; phenylpropanoid biosynthesis. Functionally, methylates caffeoyl-CoA to feruloyl-CoA and 5-hydroxyferuloyl-CoA to sinapoyl-CoA. Plays a role in the synthesis of feruloylated polysaccharides. Involved in the reinforcement of the plant cell wall. Also involved in the responding to wounding or pathogen challenge by the increased formation of cell wall-bound ferulic acid polymers. This Pinus taeda (Loblolly pine) protein is Caffeoyl-CoA O-methyltransferase (CCOAOMT).